A 314-amino-acid chain; its full sequence is Pseudouridine-5'-phosphate glycosidase (314 aa).

Glu-30 acts as the Proton donor in catalysis. Residues Lys-91 and Val-111 each contribute to the substrate site. Asp-143 contacts Mn(2+). Position 145–147 (145–147 (SAD)) interacts with substrate. The Nucleophile role is filled by Lys-164.

Belongs to the pseudouridine-5'-phosphate glycosidase family. Homotrimer. Mn(2+) serves as cofactor.

The enzyme catalyses D-ribose 5-phosphate + uracil = psi-UMP + H2O. Its function is as follows. Catalyzes the reversible cleavage of pseudouridine 5'-phosphate (PsiMP) to ribose 5-phosphate and uracil. Functions biologically in the cleavage direction, as part of a pseudouridine degradation pathway. The polypeptide is Pseudouridine-5'-phosphate glycosidase (Cupriavidus pinatubonensis (strain JMP 134 / LMG 1197) (Cupriavidus necator (strain JMP 134))).